Consider the following 55-residue polypeptide: Large ribosomal subunit protein bL33 (55 aa).

This sequence belongs to the bacterial ribosomal protein bL33 family.

The protein is Large ribosomal subunit protein bL33 of Paraburkholderia phytofirmans (strain DSM 17436 / LMG 22146 / PsJN) (Burkholderia phytofirmans).